A 592-amino-acid polypeptide reads, in one-letter code: MRTHYCGHLNKSLAGQTVELCGWVNRRRDLGGLIFIDMRDREGIVQVVVDPDMADAYEVANTLRNEFCIKLTGEVRVRPESQVNKDMATGEVEILAKGLEIINRSDVLPLDFNQKNSEEQRLKYRYLDLRRPEMSDRIKLRAKASSFVRRFLDDNGFLDIETPVLTKATPEGARDYLVPSRVHKGSFYALPQSPQLFKQLLMMSGFDRYYQIVKCFRDEDLRADRQPEFTQIDIETSFMTADQVREVTEKMVREMWQELLNVDLGEFPVMPFSEAIRRFGSDKPDLRNPLELVDVADLVKDVEFKVFSGPANDEKGRVAVIRVPGGAELTRKQIDGYAEFVGIYGAKGLAWMKVNDRAAGVEGIQSPVAKFLSEDVINGILDRTQAESGDIILFGADKANIVAEALGALRLKLGKDLGLTKEGTWAPLWVVDFPMFEEDDEGNLHAMHHPFTSPLGVTAEELKANPAVANSNAYDMVLNGYEVGGGSVRIHNAEMQAAVFDILGIDAEEQQLKFGFLLDALKFGTPPHAGLAFGLDRLVMLLCGTENIRDVIAFPKTTAAACLLTDAPSIANPAALEELAIAVTAAKAKDAE.

E171 lines the L-aspartate pocket. The tract at residues 195–198 (QLFK) is aspartate. Residue R217 participates in L-aspartate binding. ATP contacts are provided by residues 217-219 (RDE) and Q226. H448 contacts L-aspartate. E482 provides a ligand contact to ATP. Position 489 (R489) interacts with L-aspartate. Residue 534–537 (GLDR) participates in ATP binding.

Belongs to the class-II aminoacyl-tRNA synthetase family. Type 1 subfamily. In terms of assembly, homodimer.

The protein localises to the cytoplasm. It carries out the reaction tRNA(Asp) + L-aspartate + ATP = L-aspartyl-tRNA(Asp) + AMP + diphosphate. Its function is as follows. Catalyzes the attachment of L-aspartate to tRNA(Asp) in a two-step reaction: L-aspartate is first activated by ATP to form Asp-AMP and then transferred to the acceptor end of tRNA(Asp). This Vibrio parahaemolyticus serotype O3:K6 (strain RIMD 2210633) protein is Aspartate--tRNA ligase.